The chain runs to 161 residues: MTELKVKTEKVEKQLTRELLKPVLKTPKEKIDNSGKFYATGKRKNAIARVWLKVGKGKIVVNKKTIDQYFPSETYVKTILQPFVLTKTIDQYDVICTVRGGGISGQKGAILHGISKALDKSAPDFHAILRKGGLLTRDSRVVERKKYGQRKARKKTQFSKR.

The protein belongs to the universal ribosomal protein uS9 family.

The protein is Small ribosomal subunit protein uS9 of Rickettsia felis (strain ATCC VR-1525 / URRWXCal2) (Rickettsia azadi).